We begin with the raw amino-acid sequence, 605 residues long: Capsid scaffolding protein (605 aa).

Residues H52, S120, and H139 each act as charge relay system in the active site. Positions 326 to 344 (GEFVLIPTAYYSQLLTGQT) are interaction with pAP. The interaction with major capsid protein stretch occupies residues 585 to 605 (IQGSTADDADMFANQMMVGRC).

Belongs to the herpesviridae capsid scaffolding protein family. In terms of assembly, homomultimer. Interacts with major capsid protein. As to quaternary structure, exists in a monomer-dimer equilibrium with the dimer being the active species. In terms of processing, capsid scaffolding protein is cleaved by assemblin after formation of the spherical procapsid. As a result, the capsid obtains its mature, icosahedral shape. Cleavages occur at two or more sites: release (R-site) and maturation (M-site).

The protein localises to the host cytoplasm. It localises to the host nucleus. It catalyses the reaction Cleaves -Ala-|-Ser- and -Ala-|-Ala- bonds in the scaffold protein.. Acts as a scaffold protein by binding major capsid protein in the cytoplasm, inducing the nuclear localization of both proteins. Multimerizes in the nucleus such as major capsid protein forms the icosahedral T=16 capsid. Autocatalytic cleavage releases the assembly protein, and subsequently abolishes interaction with major capsid protein. Cleavages products are evicted from the capsid before or during DNA packaging. Its function is as follows. Protease that plays an essential role in virion assembly within the nucleus. Catalyzes the cleavage of the assembly protein after formation of the spherical procapsid. By that cleavage, the capsid matures and gains its icosahedral shape. The cleavage sites seem to include -Ala-Ser-, -Ala-Ala-, as well as Ala-Thr bonds. Assemblin and cleavages products are evicted from the capsid before or during DNA packaging. Functionally, plays a major role in capsid assembly. Acts as a scaffold protein by binding major capsid protein. Multimerizes in the nucleus such as major capsid protein forms the icosahedral T=16 capsid. Cleaved by assemblin after capsid completion. The cleavages products are evicted from the capsid before or during DNA packaging. In Varicella-zoster virus (strain Dumas) (HHV-3), this protein is Capsid scaffolding protein (33).